Here is a 117-residue protein sequence, read N- to C-terminus: Ribosome-binding factor A (117 aa).

The protein belongs to the RbfA family. Monomer. Binds 30S ribosomal subunits, but not 50S ribosomal subunits or 70S ribosomes.

The protein localises to the cytoplasm. In terms of biological role, one of several proteins that assist in the late maturation steps of the functional core of the 30S ribosomal subunit. Associates with free 30S ribosomal subunits (but not with 30S subunits that are part of 70S ribosomes or polysomes). Required for efficient processing of 16S rRNA. May interact with the 5'-terminal helix region of 16S rRNA. The protein is Ribosome-binding factor A of Leptospira interrogans serogroup Icterohaemorrhagiae serovar Lai (strain 56601).